We begin with the raw amino-acid sequence, 21 residues long: Venom peptide Ocy4 (21 aa).

In terms of tissue distribution, expressed by the venom gland.

It is found in the secreted. This Opisthacanthus cayaporum (South American scorpion) protein is Venom peptide Ocy4.